Consider the following 155-residue polypeptide: Endoribonuclease YbeY (155 aa).

Zn(2+) contacts are provided by histidine 114, histidine 118, and histidine 124.

The protein belongs to the endoribonuclease YbeY family. Zn(2+) is required as a cofactor.

The protein localises to the cytoplasm. Its function is as follows. Single strand-specific metallo-endoribonuclease involved in late-stage 70S ribosome quality control and in maturation of the 3' terminus of the 16S rRNA. In Escherichia coli O7:K1 (strain IAI39 / ExPEC), this protein is Endoribonuclease YbeY.